A 1180-amino-acid chain; its full sequence is Nonsense-mediated mRNA decay factor SMG7 (1180 aa).

TPR repeat units lie at residues 151–184 (QHCL…VPSN) and 186–218 (QPYN…KFPF). Disordered stretches follow at residues 496–636 (PQEK…TQTT), 692–795 (QTAS…SYMQ), 893–913 (CSDQ…SSPL), 1019–1127 (SLFE…WAAQ), and 1148–1180 (SSMM…NPPH). Residues 504–520 (LQESSNGEQTPNESTHG) are compositionally biased toward polar residues. 3 stretches are compositionally biased toward basic and acidic residues: residues 547–559 (ENIK…REQN), 584–606 (NEQK…KTTD), and 615–627 (TELR…EARK). Residues 692 to 718 (QTASHPQSANPVQTGKPSHIPYSQQRP) show a composition bias toward polar residues. The segment covering 728–740 (PPQPQQTQPPPPQ) has biased composition (pro residues). Residues 741-778 (TSQQALQQSVQLQLQQQQQQQQQQQQQQQQSPTKQSSQ) are compositionally biased toward low complexity. The span at 1026 to 1038 (WSPSLPASSDHST) shows a compositional bias: polar residues. Residues 1039 to 1065 (PASQSPHSSNPSSLPSSPPTHSHGSMP) show a composition bias toward low complexity. A compositionally biased stretch (basic and acidic residues) spans 1076–1090 (DSRDRRANDRWKAEK). Residues 1103–1125 (SASTSSVPETNSWHQGAPTSTWA) show a composition bias toward polar residues.

It is found in the cytoplasm. The protein localises to the nucleus. In terms of biological role, plays a role in nonsense-mediated mRNA decay. Recruits UPF1 to cytoplasmic mRNA decay bodies. Together with SMG5 is thought to provide a link to the mRNA degradation machinery involving exonucleolytic pathways, and to serve as an adapter for UPF1 to protein phosphatase 2A (PP2A), thereby triggering UPF1 dephosphorylation. Required for normal embryonic development. The sequence is that of Nonsense-mediated mRNA decay factor SMG7 from Danio rerio (Zebrafish).